The primary structure comprises 308 residues: UDP-N-acetylenolpyruvoylglucosamine reductase (308 aa).

The region spanning 30–213 (RVGGAAEWFI…KATTQSHLDH (184 aa)) is the FAD-binding PCMH-type domain. R176 is a catalytic residue. S227 (proton donor) is an active-site residue. Residue E297 is part of the active site.

This sequence belongs to the MurB family. The cofactor is FAD.

Its subcellular location is the cytoplasm. The catalysed reaction is UDP-N-acetyl-alpha-D-muramate + NADP(+) = UDP-N-acetyl-3-O-(1-carboxyvinyl)-alpha-D-glucosamine + NADPH + H(+). It participates in cell wall biogenesis; peptidoglycan biosynthesis. Its function is as follows. Cell wall formation. In Acaryochloris marina (strain MBIC 11017), this protein is UDP-N-acetylenolpyruvoylglucosamine reductase.